Here is a 490-residue protein sequence, read N- to C-terminus: Glutamate--tRNA ligase 1 (490 aa).

The 'HIGH' region motif lies at 27–37 (PSPTGYLHIGG). The 'KMSKS' region motif lies at 254–258 (KLSKR). Residue lysine 257 coordinates ATP.

The protein belongs to the class-I aminoacyl-tRNA synthetase family. Glutamate--tRNA ligase type 1 subfamily. Monomer.

It localises to the cytoplasm. The catalysed reaction is tRNA(Glu) + L-glutamate + ATP = L-glutamyl-tRNA(Glu) + AMP + diphosphate. Functionally, catalyzes the attachment of glutamate to tRNA(Glu) in a two-step reaction: glutamate is first activated by ATP to form Glu-AMP and then transferred to the acceptor end of tRNA(Glu). The polypeptide is Glutamate--tRNA ligase 1 (Sphingopyxis alaskensis (strain DSM 13593 / LMG 18877 / RB2256) (Sphingomonas alaskensis)).